Consider the following 392-residue polypeptide: Elongation factor Tu 2 (392 aa).

Residues lysine 10 to glutamate 201 enclose the tr-type G domain. Residues glycine 19 to threonine 26 form a G1 region. Residue glycine 19–threonine 26 participates in GTP binding. Threonine 26 serves as a coordination point for Mg(2+). Positions glycine 55–serine 59 are G2. Residues aspartate 76 to glycine 79 form a G3 region. GTP is bound by residues aspartate 76–histidine 80 and asparagine 131–aspartate 134. The segment at asparagine 131–aspartate 134 is G4. Residues serine 169–leucine 171 are G5.

It belongs to the TRAFAC class translation factor GTPase superfamily. Classic translation factor GTPase family. EF-Tu/EF-1A subfamily. As to quaternary structure, monomer.

Its subcellular location is the cytoplasm. It catalyses the reaction GTP + H2O = GDP + phosphate + H(+). Functionally, GTP hydrolase that promotes the GTP-dependent binding of aminoacyl-tRNA to the A-site of ribosomes during protein biosynthesis. This is Elongation factor Tu 2 from Rhizobium etli (strain ATCC 51251 / DSM 11541 / JCM 21823 / NBRC 15573 / CFN 42).